The chain runs to 146 residues: Stress-responsive DNAJB4-interacting membrane protein 1 (146 aa).

An N-terminal signal peptide occupies residues Met1–Gly26. At Cys27 to Pro66 the chain is on the extracellular side. A helical membrane pass occupies residues Pro67–Ile87. Residues Ser88–Gln94 are Cytoplasmic-facing. Residues Val95–Ser115 form a helical membrane-spanning segment. The Extracellular portion of the chain corresponds to His116–Ile146.

Homodimer. Interacts with DNAJB4. As to expression, expressed in brain with higher detection in neurons than astrocytes. Decreased expression in Alzheimer brains. Detected at protein level in brain and cervix.

The protein resides in the membrane. Its function is as follows. Promotes neuronal cells survival to stress conditions. This chain is Stress-responsive DNAJB4-interacting membrane protein 1 (SDIM1), found in Homo sapiens (Human).